The sequence spans 127 residues: Large ribosomal subunit protein bL12 (127 aa).

This sequence belongs to the bacterial ribosomal protein bL12 family. As to quaternary structure, homodimer. Part of the ribosomal stalk of the 50S ribosomal subunit. Forms a multimeric L10(L12)X complex, where L10 forms an elongated spine to which 2 to 4 L12 dimers bind in a sequential fashion. Binds GTP-bound translation factors.

Forms part of the ribosomal stalk which helps the ribosome interact with GTP-bound translation factors. Is thus essential for accurate translation. The polypeptide is Large ribosomal subunit protein bL12 (Bordetella bronchiseptica (strain ATCC BAA-588 / NCTC 13252 / RB50) (Alcaligenes bronchisepticus)).